We begin with the raw amino-acid sequence, 273 residues long: 2,3,4,5-tetrahydropyridine-2,6-dicarboxylate N-succinyltransferase (273 aa).

Positions 104 and 141 each coordinate substrate.

It belongs to the transferase hexapeptide repeat family. Homotrimer.

It localises to the cytoplasm. It catalyses the reaction (S)-2,3,4,5-tetrahydrodipicolinate + succinyl-CoA + H2O = (S)-2-succinylamino-6-oxoheptanedioate + CoA. It functions in the pathway amino-acid biosynthesis; L-lysine biosynthesis via DAP pathway; LL-2,6-diaminopimelate from (S)-tetrahydrodipicolinate (succinylase route): step 1/3. This Aromatoleum aromaticum (strain DSM 19018 / LMG 30748 / EbN1) (Azoarcus sp. (strain EbN1)) protein is 2,3,4,5-tetrahydropyridine-2,6-dicarboxylate N-succinyltransferase.